The primary structure comprises 332 residues: Adenosine deaminase (332 aa).

Zn(2+)-binding residues include histidine 12 and histidine 14. Substrate is bound by residues histidine 14, aspartate 16, and glycine 170. Histidine 197 is a Zn(2+) binding site. The active-site Proton donor is the glutamate 200. Aspartate 278 is a Zn(2+) binding site.

This sequence belongs to the metallo-dependent hydrolases superfamily. Adenosine and AMP deaminases family. Adenosine deaminase subfamily. The cofactor is Zn(2+).

The catalysed reaction is adenosine + H2O + H(+) = inosine + NH4(+). The enzyme catalyses 2'-deoxyadenosine + H2O + H(+) = 2'-deoxyinosine + NH4(+). Its function is as follows. Catalyzes the hydrolytic deamination of adenosine and 2-deoxyadenosine. The protein is Adenosine deaminase of Clostridium perfringens (strain 13 / Type A).